The following is a 296-amino-acid chain: Bifunctional protein FolD (296 aa).

Residues 166-168, Ser-195, and Thr-236 each bind NADP(+); that span reads GRS.

This sequence belongs to the tetrahydrofolate dehydrogenase/cyclohydrolase family. As to quaternary structure, homodimer.

It catalyses the reaction (6R)-5,10-methylene-5,6,7,8-tetrahydrofolate + NADP(+) = (6R)-5,10-methenyltetrahydrofolate + NADPH. The catalysed reaction is (6R)-5,10-methenyltetrahydrofolate + H2O = (6R)-10-formyltetrahydrofolate + H(+). Its pathway is one-carbon metabolism; tetrahydrofolate interconversion. Its function is as follows. Catalyzes the oxidation of 5,10-methylenetetrahydrofolate to 5,10-methenyltetrahydrofolate and then the hydrolysis of 5,10-methenyltetrahydrofolate to 10-formyltetrahydrofolate. This is Bifunctional protein FolD from Dehalococcoides mccartyi (strain CBDB1).